Consider the following 284-residue polypeptide: Proton-translocating ferredoxin:NAD(+) oxidoreductase complex subunit B (284 aa).

The tract at residues 1–26 (MNTVIMILVVMTIIGLIFGLVLAYVN) is hydrophobic. In terms of domain architecture, 4Fe-4S spans 32–92 (EVNPLVDLVE…AEQVAKLTGK (61 aa)). 20 residues coordinate [4Fe-4S] cluster: cysteine 49, cysteine 52, cysteine 57, cysteine 75, cysteine 138, cysteine 142, cysteine 148, cysteine 152, cysteine 172, cysteine 175, cysteine 178, cysteine 182, cysteine 217, cysteine 220, cysteine 223, cysteine 227, cysteine 246, cysteine 249, cysteine 254, and cysteine 258. 4 4Fe-4S ferredoxin-type domains span residues 133-162 (GGPK…MGSN), 163-192 (GLPI…FRPV), 206-237 (GGAV…VENN), and 239-269 (AVVD…IVSG).

This sequence belongs to the 4Fe4S bacterial-type ferredoxin family. RnfB subfamily. The complex is composed of six subunits: RnfA, RnfB, RnfC, RnfD, RnfE and RnfG. [4Fe-4S] cluster is required as a cofactor.

Its subcellular location is the cell membrane. Its function is as follows. Part of a membrane-bound complex that couples electron transfer with translocation of ions across the membrane. Couples electron transfer from reduced ferredoxin to NAD(+) with translocation of H(+) out of the cell. Essential for energy conservation during autotrophic growth. Contributes to ATP synthesis during heterotrophic growth. This Clostridium ljungdahlii (strain ATCC 55383 / DSM 13528 / PETC) protein is Proton-translocating ferredoxin:NAD(+) oxidoreductase complex subunit B.